A 461-amino-acid polypeptide reads, in one-letter code: UDP-N-acetylmuramate--L-alanine ligase (461 aa).

Position 112–118 (112–118) interacts with ATP; that stretch reads GTHGKTT.

It belongs to the MurCDEF family.

It localises to the cytoplasm. The enzyme catalyses UDP-N-acetyl-alpha-D-muramate + L-alanine + ATP = UDP-N-acetyl-alpha-D-muramoyl-L-alanine + ADP + phosphate + H(+). Its pathway is cell wall biogenesis; peptidoglycan biosynthesis. In terms of biological role, cell wall formation. This is UDP-N-acetylmuramate--L-alanine ligase from Geobacter sp. (strain M21).